The following is a 246-amino-acid chain: Serine protease 1 (246 aa).

The first 15 residues, 1–15 (MSALLILALVGAAVA), serve as a signal peptide directing secretion. Residues 16–23 (FPLEDDDK) constitute a propeptide, activation peptide. A Peptidase S1 domain is found at 24–244 (IVGGYTCPEH…FVGWIQDTIA (221 aa)). 6 disulfide bridges follow: cysteine 30–cysteine 160, cysteine 48–cysteine 64, cysteine 132–cysteine 233, cysteine 139–cysteine 206, cysteine 171–cysteine 185, and cysteine 196–cysteine 220. Catalysis depends on histidine 63, which acts as the Charge relay system. Ca(2+)-binding residues include glutamate 75, asparagine 77, valine 80, and glutamate 85. Residue aspartate 107 is the Charge relay system of the active site. The active-site Charge relay system is serine 200.

It belongs to the peptidase S1 family. In terms of assembly, interacts with SERPINA1. The cofactor is Ca(2+).

It localises to the secreted. It is found in the extracellular space. It carries out the reaction Preferential cleavage: Arg-|-Xaa, Lys-|-Xaa.. This chain is Serine protease 1, found in Rattus norvegicus (Rat).